The primary structure comprises 544 residues: Methionine--tRNA ligase (544 aa).

Positions 10-20 (PYANGSLHLGH) match the 'HIGH' region motif. Cys141, Cys144, Cys153, and Cys156 together coordinate Zn(2+). A 'KMSKS' region motif is present at residues 329-333 (KLSTS). Thr332 serves as a coordination point for ATP.

This sequence belongs to the class-I aminoacyl-tRNA synthetase family. MetG type 1 subfamily. As to quaternary structure, monomer. Requires Zn(2+) as cofactor.

The protein localises to the cytoplasm. The catalysed reaction is tRNA(Met) + L-methionine + ATP = L-methionyl-tRNA(Met) + AMP + diphosphate. In terms of biological role, is required not only for elongation of protein synthesis but also for the initiation of all mRNA translation through initiator tRNA(fMet) aminoacylation. This is Methionine--tRNA ligase from Bacillus cereus (strain 03BB102).